The following is a 181-amino-acid chain: Glucose-1-phosphate adenylyltransferase large subunit 2 (181 aa).

It belongs to the bacterial/plant glucose-1-phosphate adenylyltransferase family. In terms of assembly, heterotetramer. In terms of tissue distribution, leaves.

The protein localises to the plastid. It localises to the chloroplast. Its subcellular location is the amyloplast. It carries out the reaction alpha-D-glucose 1-phosphate + ATP + H(+) = ADP-alpha-D-glucose + diphosphate. It functions in the pathway glycan biosynthesis; starch biosynthesis. Its activity is regulated as follows. Highly active without 3'phosphoglycerate, and is only slightly affected by the activator 3'phosphoglycerate and inhibitor orthophosphate. Its function is as follows. This protein plays a role in synthesis of starch. It catalyzes the synthesis of the activated glycosyl donor, ADP-glucose from Glc-1-P and ATP. In Hordeum vulgare (Barley), this protein is Glucose-1-phosphate adenylyltransferase large subunit 2.